The following is a 154-amino-acid chain: MVKAVAVLRGDSNIKGTVTFEQADENSPTTISWNITGHDANAERGIHVHQFGDNTNGCTSAGPHFNPFGKTHGAPTDDERHVGDLGNFKTDAQGNAVGFVEDKLIKLIGAESVLGRTIVVHAGTDDLGRGGNEESKKTGNAGPRPACGVIGISA.

Residues H47, H49, and H64 each coordinate Cu cation. An intrachain disulfide couples C58 to C147. Residues H64, H72, H81, and D84 each contribute to the Zn(2+) site. H121 contacts Cu cation. Positions 126 to 137 (DLGRGGNEESKK) are enriched in basic and acidic residues. A disordered region spans residues 126-147 (DLGRGGNEESKKTGNAGPRPAC).

The protein belongs to the Cu-Zn superoxide dismutase family. As to quaternary structure, homodimer. Requires Cu cation as cofactor. Zn(2+) is required as a cofactor.

Its subcellular location is the cytoplasm. It carries out the reaction 2 superoxide + 2 H(+) = H2O2 + O2. Destroys radicals which are normally produced within the cells and which are toxic to biological systems. Plays an important role in the phase transition, and may be important in vivo, as it would facilitate the intracellular survival of the fungus by providing a non-toxic environment in the macrophage phagolysosomes. The chain is Superoxide dismutase [Cu-Zn] from Talaromyces marneffei (Penicillium marneffei).